Here is an 838-residue protein sequence, read N- to C-terminus: Probable inorganic carbon transporter subunit DabA (838 aa).

4 residues coordinate Zn(2+): cysteine 353, aspartate 355, histidine 537, and cysteine 552.

Belongs to the inorganic carbon transporter (TC 9.A.2) DabA family. In terms of assembly, forms a complex with DabB. It depends on Zn(2+) as a cofactor.

It is found in the cell membrane. Functionally, part of an energy-coupled inorganic carbon pump. The polypeptide is Probable inorganic carbon transporter subunit DabA (Roseiflexus sp. (strain RS-1)).